The sequence spans 685 residues: ATP-dependent permease MDL1 (685 aa).

Positions 48-70 are enriched in polar residues; sequence FNSKSSTAPNTEANSNGSTNSQS. The segment at 48–76 is disordered; sequence FNSKSSTAPNTEANSNGSTNSQSDTKKPR. A glycan (N-linked (GlcNAc...) asparagine) is linked at N63. The chain crosses the membrane as a helical span at residues 96–116; it reads LIFFALICLVTTSATSMALPL. An ABC transmembrane type-1 domain is found at 97-407; the sequence is IFFALICLVT…LGNFYTELMK (311 aa). The tract at residues 125–147 is disordered; sequence TKKDDDDDKDNDNDDKDDTQPSD. The span at 129-141 shows a compositional bias: acidic residues; it reads DDDDKDNDNDDKD. Residues 158 to 180 form a helical membrane-spanning segment; it reads FYSALGVLFIVSASTNFGRIYLL. The N-linked (GlcNAc...) asparagine glycan is linked to N239. A helical transmembrane segment spans residues 266–282; sequence LCMSLIFPPLITMSWFY. N336 is a glycosylation site (N-linked (GlcNAc...) asparagine). Helical transmembrane passes span 353–373 and 381–401; these read GFIG…LIGA and LSSF…LGNF. Residues 440–680 form the ABC transporter domain; it reads IEFKGIDFTY…PNSQFNKLLK (241 aa). 475 to 482 is an ATP binding site; it reads GPSGSGKS. N-linked (GlcNAc...) asparagine glycans are attached at residues N553 and N576.

This sequence belongs to the ABC transporter superfamily. ABCB family. Mitochondrial peptide exporter (TC 3.A.1.212) subfamily.

It localises to the membrane. The protein is ATP-dependent permease MDL1 (MDL1) of Candida albicans (Yeast).